A 551-amino-acid chain; its full sequence is DNA mismatch repair protein MutL (551 aa).

This sequence belongs to the DNA mismatch repair MutL/HexB family.

In terms of biological role, this protein is involved in the repair of mismatches in DNA. It is required for dam-dependent methyl-directed DNA mismatch repair. May act as a 'molecular matchmaker', a protein that promotes the formation of a stable complex between two or more DNA-binding proteins in an ATP-dependent manner without itself being part of a final effector complex. This is DNA mismatch repair protein MutL from Thermosipho melanesiensis (strain DSM 12029 / CIP 104789 / BI429).